Consider the following 348-residue polypeptide: Ribosomal RNA small subunit methyltransferase C (348 aa).

It belongs to the methyltransferase superfamily. RsmC family. In terms of assembly, monomer.

It is found in the cytoplasm. It carries out the reaction guanosine(1207) in 16S rRNA + S-adenosyl-L-methionine = N(2)-methylguanosine(1207) in 16S rRNA + S-adenosyl-L-homocysteine + H(+). In terms of biological role, specifically methylates the guanine in position 1207 of 16S rRNA in the 30S particle. In Pectobacterium atrosepticum (strain SCRI 1043 / ATCC BAA-672) (Erwinia carotovora subsp. atroseptica), this protein is Ribosomal RNA small subunit methyltransferase C.